The chain runs to 184 residues: Large ribosomal subunit protein uL6 (184 aa).

It belongs to the universal ribosomal protein uL6 family. In terms of assembly, part of the 50S ribosomal subunit.

Functionally, this protein binds to the 23S rRNA, and is important in its secondary structure. It is located near the subunit interface in the base of the L7/L12 stalk, and near the tRNA binding site of the peptidyltransferase center. The chain is Large ribosomal subunit protein uL6 from Methanosphaera stadtmanae (strain ATCC 43021 / DSM 3091 / JCM 11832 / MCB-3).